A 259-amino-acid chain; its full sequence is 3-deoxy-manno-octulosonate cytidylyltransferase (259 aa).

Belongs to the KdsB family.

The protein resides in the cytoplasm. It carries out the reaction 3-deoxy-alpha-D-manno-oct-2-ulosonate + CTP = CMP-3-deoxy-beta-D-manno-octulosonate + diphosphate. It functions in the pathway nucleotide-sugar biosynthesis; CMP-3-deoxy-D-manno-octulosonate biosynthesis; CMP-3-deoxy-D-manno-octulosonate from 3-deoxy-D-manno-octulosonate and CTP: step 1/1. The protein operates within bacterial outer membrane biogenesis; lipopolysaccharide biosynthesis. Its function is as follows. Activates KDO (a required 8-carbon sugar) for incorporation into bacterial lipopolysaccharide in Gram-negative bacteria. The chain is 3-deoxy-manno-octulosonate cytidylyltransferase from Xanthomonas oryzae pv. oryzae (strain KACC10331 / KXO85).